The primary structure comprises 860 residues: M-phase phosphoprotein 8 (860 aa).

Met-1 carries the post-translational modification N-acetylmethionine. Ser-51, Ser-85, Ser-136, and Ser-138 each carry phosphoserine. One can recognise a Chromo domain in the interval 59–118; sequence FEVEKILDMKTEGGKVLYKVRWKGYTSDDDTWEPEIHLEDCKEVLLEFRKKIAENKAKAV. The interval 80 to 87 is histone H3K9me3 binding; that stretch reads WKGYTSDD. Polar residues predominate over residues 129-141; sequence NDIFEANSDSDQQ. The interval 129 to 191 is disordered; it reads NDIFEANSDS…SKPDLESSLE (63 aa). Thr-144 bears the Phosphothreonine mark. 2 positions are modified to phosphoserine; by CDK1: Ser-149 and Ser-164. Composition is skewed to basic and acidic residues over residues 159–169 and 177–186; these read QREEKSPDDLK and KLKDKSKPDL. Ser-188, Ser-189, and Ser-192 each carry phosphoserine. The segment covering 206-249 has biased composition (basic and acidic residues); that stretch reads AKEELKESKKPKKDEVKETKELKKVKKGEIRDLKTKTREDPKEN. The interval 206-440 is disordered; that stretch reads AKEELKESKK…GRKEPKGLKT (235 aa). Over residues 259–268 the composition is skewed to low complexity; that stretch reads ESQVESESSV. Phosphoserine is present on residues Ser-266, Ser-272, and Ser-279. The span at 280 to 314 shows a compositional bias: basic and acidic residues; it reads EGLHSDSREEKQNTKSARERAGQDMGLEHGFEKPL. Ser-319 carries the phosphoserine modification. At Thr-334 the chain carries Phosphothreonine; by CDK1. Positions 336-377 are enriched in basic and acidic residues; the sequence is RKAEDTRENRKLENKNAFLEKKTVPKKQRNQDRSKSAAELEK. The residue at position 385 (Thr-385) is a Phosphothreonine; by CDK1. 3 positions are modified to phosphoserine: Ser-392, Ser-400, and Ser-403. Positions 408-440 are enriched in basic and acidic residues; sequence KETKRNESKEKYQKRHDSDKEEKGRKEPKGLKT. An interaction with humanin region spans residues 431-560; sequence GRKEPKGLKT…HLDGKDENFA (130 aa). Thr-454 carries the phosphothreonine modification. A disordered region spans residues 458-496; it reads KNDVSENNRKREEIPLDFKTIDDHKTKENKQSLKERRNT. ANK repeat units lie at residues 600-629, 633-662, 666-695, and 699-728; these read SGMTLVMLAAAGGQDDLLRLLITKGAKVNG, NGTTALIHAAEKNFLTTVAILLEAGAFVNV, NGETALMKACKRGNSDIVRLVIECGADCNI, and HQNSALHFAKQSNNVLVYDLLKNHLETLSR.

As to quaternary structure, homodimer. Interacts (via chromo domain) with histone H3K9me3. Has the highest affinity for H3K9me3, and lesser affinity for H3K9me2 and H3K9me1. Component of the HUSH complex; at least composed of TASOR, PPHLN1 and MPHOSPH8. Interacts with DNMT3, EHMT1 and SETDB1. Interacts with MORC2; the interaction associateS MORC2 with the HUSH complex which recruits MORC2 to heterochromatic loci. Interacts with ZNF638; leading to recruitment of the HUSH complex to unintegrated retroviral DNA. Interacts with TASOR. Interacts with humanin. Phosphorylated in M (mitotic) phase. Phosphorylation by CDK1 promotes dissociation from chromatin.

The protein resides in the nucleus. It localises to the chromosome. Functionally, heterochromatin component that specifically recognizes and binds methylated 'Lys-9' of histone H3 (H3K9me) and promotes recruitment of proteins that mediate epigenetic repression. Mediates recruitment of the HUSH complex to H3K9me3 sites: the HUSH complex is recruited to genomic loci rich in H3K9me3 and is required to maintain transcriptional silencing by promoting recruitment of SETDB1, a histone methyltransferase that mediates further deposition of H3K9me3, as well as MORC2. Binds H3K9me and promotes DNA methylation by recruiting DNMT3A to target CpG sites; these can be situated within the coding region of the gene. Mediates down-regulation of CDH1 expression. Also represses L1 retrotransposons in collaboration with MORC2 and, probably, SETDB1, the silencing is dependent of repressive epigenetic modifications, such as H3K9me3 mark. Silencing events often occur within introns of transcriptionally active genes, and lead to the down-regulation of host gene expression. The HUSH complex is also involved in the silencing of unintegrated retroviral DNA by being recruited by ZNF638: some part of the retroviral DNA formed immediately after infection remains unintegrated in the host genome and is transcriptionally repressed. The protein is M-phase phosphoprotein 8 of Homo sapiens (Human).